Here is a 117-residue protein sequence, read N- to C-terminus: Large ribosomal subunit protein uL18 (117 aa).

The protein belongs to the universal ribosomal protein uL18 family. As to quaternary structure, part of the 50S ribosomal subunit; part of the 5S rRNA/L5/L18/L25 subcomplex. Contacts the 5S and 23S rRNAs.

This is one of the proteins that bind and probably mediate the attachment of the 5S RNA into the large ribosomal subunit, where it forms part of the central protuberance. This chain is Large ribosomal subunit protein uL18, found in Tolumonas auensis (strain DSM 9187 / NBRC 110442 / TA 4).